Consider the following 244-residue polypeptide: Large ribosomal subunit protein uL3 (244 aa).

It belongs to the universal ribosomal protein uL3 family. As to quaternary structure, part of the 50S ribosomal subunit. Forms a cluster with proteins L14 and L19.

Functionally, one of the primary rRNA binding proteins, it binds directly near the 3'-end of the 23S rRNA, where it nucleates assembly of the 50S subunit. This is Large ribosomal subunit protein uL3 from Aquifex pyrophilus.